A 637-amino-acid polypeptide reads, in one-letter code: Phospholipase B (637 aa).

The N-terminal stretch at 1-19 (MSIITTAFALSLLATTAFA) is a signal peptide. Residues 46–572 (DCPSNVTWIR…DTWCWAGDDN (527 aa)) enclose the PLA2c domain. 17 N-linked (GlcNAc...) asparagine glycosylation sites follow: asparagine 50, asparagine 56, asparagine 122, asparagine 231, asparagine 246, asparagine 272, asparagine 314, asparagine 343, asparagine 387, asparagine 433, asparagine 481, asparagine 501, asparagine 528, asparagine 553, asparagine 572, asparagine 594, and asparagine 606.

This sequence belongs to the lysophospholipase family. N-glycosylated.

Its subcellular location is the secreted. It catalyses the reaction a 1-acyl-sn-glycero-3-phosphocholine + H2O = sn-glycerol 3-phosphocholine + a fatty acid + H(+). Exhibits phospholipase B (PLB), lysophospholipase (LPL) and lysophospholipase/transacylase (LPTA) activities. The chain is Phospholipase B (PLB1) from Cryptococcus neoformans var. neoformans serotype D (strain B-3501A) (Filobasidiella neoformans).